The chain runs to 671 residues: DNA ligase (671 aa).

Residues 34 to 38 (DSEYD), 83 to 84 (SL), and Glu113 contribute to the NAD(+) site. The active-site N6-AMP-lysine intermediate is the Lys115. Positions 136, 170, 286, and 310 each coordinate NAD(+). Zn(2+)-binding residues include Cys404, Cys407, Cys422, and Cys427. One can recognise a BRCT domain in the interval 590-671 (EEAGVFAGKT…FTQAVEQSEQ (82 aa)).

The protein belongs to the NAD-dependent DNA ligase family. LigA subfamily. It depends on Mg(2+) as a cofactor. Requires Mn(2+) as cofactor.

The catalysed reaction is NAD(+) + (deoxyribonucleotide)n-3'-hydroxyl + 5'-phospho-(deoxyribonucleotide)m = (deoxyribonucleotide)n+m + AMP + beta-nicotinamide D-nucleotide.. DNA ligase that catalyzes the formation of phosphodiester linkages between 5'-phosphoryl and 3'-hydroxyl groups in double-stranded DNA using NAD as a coenzyme and as the energy source for the reaction. It is essential for DNA replication and repair of damaged DNA. The chain is DNA ligase from Shouchella clausii (strain KSM-K16) (Alkalihalobacillus clausii).